The primary structure comprises 65 residues: UPF0434 protein HSM_0997 (65 aa).

The protein belongs to the UPF0434 family.

The sequence is that of UPF0434 protein HSM_0997 from Histophilus somni (strain 2336) (Haemophilus somnus).